Reading from the N-terminus, the 209-residue chain is MQVILLERVAKLGQMGEVVDVKPGYARNYLLPQGKALNASEANIAQFEAQKAQLEARNLETRKEAEAMAEKLDGQQFIVIRSASDAGALYGSVTTRDAAEAATADGFSLDRKQVSLSRPIKELGLHTVHVTLHPEVTADIVLNVARSAEEAELQASGKSIQELAAEAEAEAEFEIAELFDDIGSAASEDSDLVETPEDRATEEAEDEQP.

The interval 184–209 is disordered; the sequence is SAASEDSDLVETPEDRATEEAEDEQP.

It belongs to the bacterial ribosomal protein bL9 family.

Its function is as follows. Binds to the 23S rRNA. This chain is Large ribosomal subunit protein bL9, found in Dinoroseobacter shibae (strain DSM 16493 / NCIMB 14021 / DFL 12).